Here is a 377-residue protein sequence, read N- to C-terminus: Spermidine/putrescine import ATP-binding protein PotA (377 aa).

One can recognise an ABC transporter domain in the interval 18-248 (IRLSGISKSF…PKNLFVARFI (231 aa)). Residue 50-57 (GPSGCGKT) coordinates ATP.

It belongs to the ABC transporter superfamily. Spermidine/putrescine importer (TC 3.A.1.11.1) family. The complex is composed of two ATP-binding proteins (PotA), two transmembrane proteins (PotB and PotC) and a solute-binding protein (PotD).

It localises to the cell inner membrane. It carries out the reaction ATP + H2O + polyamine-[polyamine-binding protein]Side 1 = ADP + phosphate + polyamineSide 2 + [polyamine-binding protein]Side 1.. Part of the ABC transporter complex PotABCD involved in spermidine/putrescine import. Responsible for energy coupling to the transport system. The sequence is that of Spermidine/putrescine import ATP-binding protein PotA from Vibrio parahaemolyticus serotype O3:K6 (strain RIMD 2210633).